A 389-amino-acid chain; its full sequence is Succinate--CoA ligase [ADP-forming] subunit beta (389 aa).

The 228-residue stretch at 9-236 (RDLFEAHGVP…ERTEDPLEAK (228 aa)) folds into the ATP-grasp domain. ATP contacts are provided by residues Lys45, 52–54 (GRG), Ala94, and Glu99. Mg(2+) is bound by residues Asn191 and Asp205. Substrate contacts are provided by residues Asn256 and 318–320 (GIT).

This sequence belongs to the succinate/malate CoA ligase beta subunit family. Heterotetramer of two alpha and two beta subunits. Requires Mg(2+) as cofactor.

It carries out the reaction succinate + ATP + CoA = succinyl-CoA + ADP + phosphate. The enzyme catalyses GTP + succinate + CoA = succinyl-CoA + GDP + phosphate. Its pathway is carbohydrate metabolism; tricarboxylic acid cycle; succinate from succinyl-CoA (ligase route): step 1/1. Succinyl-CoA synthetase functions in the citric acid cycle (TCA), coupling the hydrolysis of succinyl-CoA to the synthesis of either ATP or GTP and thus represents the only step of substrate-level phosphorylation in the TCA. The beta subunit provides nucleotide specificity of the enzyme and binds the substrate succinate, while the binding sites for coenzyme A and phosphate are found in the alpha subunit. The sequence is that of Succinate--CoA ligase [ADP-forming] subunit beta from Micrococcus luteus (strain ATCC 4698 / DSM 20030 / JCM 1464 / CCM 169 / CCUG 5858 / IAM 1056 / NBRC 3333 / NCIMB 9278 / NCTC 2665 / VKM Ac-2230) (Micrococcus lysodeikticus).